A 360-amino-acid chain; its full sequence is Histidinol-phosphate aminotransferase (360 aa).

K219 is modified (N6-(pyridoxal phosphate)lysine).

This sequence belongs to the class-II pyridoxal-phosphate-dependent aminotransferase family. Histidinol-phosphate aminotransferase subfamily. In terms of assembly, homodimer. The cofactor is pyridoxal 5'-phosphate.

It carries out the reaction L-histidinol phosphate + 2-oxoglutarate = 3-(imidazol-4-yl)-2-oxopropyl phosphate + L-glutamate. Its pathway is amino-acid biosynthesis; L-histidine biosynthesis; L-histidine from 5-phospho-alpha-D-ribose 1-diphosphate: step 7/9. This chain is Histidinol-phosphate aminotransferase, found in Jannaschia sp. (strain CCS1).